The primary structure comprises 214 residues: Small ribosomal subunit protein eS6 (214 aa).

Belongs to the eukaryotic ribosomal protein eS6 family.

The protein is Small ribosomal subunit protein eS6 of Saccharolobus solfataricus (strain ATCC 35092 / DSM 1617 / JCM 11322 / P2) (Sulfolobus solfataricus).